Here is a 249-residue protein sequence, read N- to C-terminus: Uridylate kinase (249 aa).

23–26 (KISG) contacts ATP. The tract at residues 31-36 (GDQGFG) is involved in allosteric activation by GTP. A UMP-binding site is contributed by Gly65. 2 residues coordinate ATP: Gly66 and Arg70. Residues Asp85 and 146-153 (TGNPYFTT) each bind UMP. Positions 173, 179, and 182 each coordinate ATP.

This sequence belongs to the UMP kinase family. As to quaternary structure, homohexamer.

The protein resides in the cytoplasm. It carries out the reaction UMP + ATP = UDP + ADP. It participates in pyrimidine metabolism; CTP biosynthesis via de novo pathway; UDP from UMP (UMPK route): step 1/1. Allosterically activated by GTP. Inhibited by UTP. Functionally, catalyzes the reversible phosphorylation of UMP to UDP. This chain is Uridylate kinase, found in Jannaschia sp. (strain CCS1).